The following is an 89-amino-acid chain: Small ribosomal subunit protein uS15 (89 aa).

The protein belongs to the universal ribosomal protein uS15 family. Part of the 30S ribosomal subunit. Forms a bridge to the 50S subunit in the 70S ribosome, contacting the 23S rRNA.

One of the primary rRNA binding proteins, it binds directly to 16S rRNA where it helps nucleate assembly of the platform of the 30S subunit by binding and bridging several RNA helices of the 16S rRNA. Functionally, forms an intersubunit bridge (bridge B4) with the 23S rRNA of the 50S subunit in the ribosome. This chain is Small ribosomal subunit protein uS15, found in Pseudoalteromonas atlantica (strain T6c / ATCC BAA-1087).